The sequence spans 420 residues: D-tagatose-1,6-bisphosphate aldolase subunit GatZ (420 aa).

This sequence belongs to the GatZ/KbaZ family. GatZ subfamily. Forms a complex with GatY.

The protein operates within carbohydrate metabolism; D-tagatose 6-phosphate degradation; D-glyceraldehyde 3-phosphate and glycerone phosphate from D-tagatose 6-phosphate: step 2/2. Its function is as follows. Component of the tagatose-1,6-bisphosphate aldolase GatYZ that is required for full activity and stability of the Y subunit. Could have a chaperone-like function for the proper and stable folding of GatY. When expressed alone, GatZ does not show any aldolase activity. Is involved in the catabolism of galactitol. This chain is D-tagatose-1,6-bisphosphate aldolase subunit GatZ, found in Escherichia coli O9:H4 (strain HS).